The primary structure comprises 1473 residues: NACHT, LRR and PYD domains-containing protein 1 (1473 aa).

Positions 1 to 92 constitute a Pyrin domain; that stretch reads MAGGAWGRLA…CAQAQEGAGH (92 aa). The segment at 90–113 is disordered; sequence AGHSPSFPYSPSEPHLGSPSQPTS. Residues S93, S99, and S101 each carry the phosphoserine; by MAPK11 and MAPK14 modification. S107 carries the phosphoserine; by MAPK14 modification. The short motif at 111–117 is the ZAKalpha motif 1 element; it reads PTSTAVL. A Phosphothreonine; by MAPK11, MAPK14 and MAP3K20 modification is found at T112. The residue at position 113 (S113) is a Phosphoserine; by MAP3K20. Phosphothreonine; by MAP3K20 is present on residues T114 and T129. S132 carries the phosphoserine; by MAP3K20 modification. Residues 160 to 254 form a disordered region; that stretch reads LPSSPDHESP…HTSLQPHHHP (95 aa). Position 163 is a phosphoserine; by MAPK14 (S163). Position 168 is a phosphoserine; by MAPK11 and MAPk14 (S168). A Phosphoserine; by MAPK11 and MAPK14 modification is found at S170. The span at 170 to 182 shows a compositional bias: polar residues; it reads SQESPNAPTSTAV. S173 is modified (phosphoserine; by MAPK11). A ZAKalpha motif 2 motif is present at residues 177 to 183; it reads PTSTAVL. T178 carries the post-translational modification Phosphothreonine; by MAPK11. Position 179 is a phosphoserine; by MAPK11 and MAP3K20 (S179). T180 is modified (phosphothreonine; by MAPK11 and MAP3K20). Residues 218-231 show a composition bias toward basic and acidic residues; it reads EIREREREKSEKGR. The NACHT domain occupies 328–637; that stretch reads RIVILQGAAG…EFFAAMSYVL (310 aa). Residue 334-341 participates in ATP binding; sequence GAAGIGKS. LRR repeat units lie at residues 809 to 830, 838 to 858, 866 to 887, 895 to 915, 923 to 944, and 950 to 973; these read NLKE…SLCK, LLET…KDLA, TLTE…HLCQ, KLQR…QDLA, SLKE…LLCE, and ACKL…ELRA. The segment at 991–1017 is disordered; the sequence is VMTPTEGLDTGEMSNSTSSLKRQRLGS. Residues 1079 to 1212 are ZU5; the sequence is FWGPTGPVAT…HHIVLENPSF (134 aa). The 286-residue stretch at 1079-1364 folds into the FIIND domain; the sequence is FWGPTGPVAT…LMPATTLIPP (286 aa). Residues 1213 to 1364 are UPA; sequence SPLGVLLKMI…LMPATTLIPP (152 aa). One can recognise a CARD domain in the interval 1374 to 1463; that stretch reads DAPQLLHFVD…HLIMELWEKG (90 aa).

The protein belongs to the NLRP family. In terms of assembly, interacts (via LRR repeats) with BCL2 and BCL2L1 (via the loop between motifs BH4 and BH3); these interactions reduce NLRP1 inflammasome-induced CASP1 activation and IL1B release, possibly by impairing NLRP1 interaction with PYCARD. Interacts with NOD2; this interaction is enhanced in the presence of muramyl dipeptide (MDP) and increases IL1B release. Interacts with EIF2AK2/PKR; this interaction requires EIF2AK2 activity, is accompanied by EIF2AK2 autophosphorylation and promotes inflammasome assembly in response to danger-associated signals. Interacts with MEFV; this interaction targets NLRP1 to degradation by autophagy, hence preventing excessive IL1B- and IL18-mediated inflammation. Binds (via LRR domain) to dsDNA and dsRNA. Interacts with DPP9; leading to inhibit activation of the inflammasome. DPP9 acts via formation of a ternary complex, composed of a DPP9 homodimer, one full-length NLRP1 protein, and one cleaved C-terminus of NLRP1 (NACHT, LRR and PYD domains-containing protein 1, C-terminus). Interacts with DPP8; leading to inhibit activation of the inflammasome, probably via formation of a ternary complex with DPP8. As to quaternary structure, interacts with the C-terminal part of NLRP1 (NACHT, LRR and PYD domains-containing protein 1, C-terminus) in absence of pathogens and other damage-associated signals. Interacts with the N-terminal part of NLRP1 (NACHT, LRR and PYD domains-containing protein 1, N-terminus) in absence of pathogens and other damage-associated signals. Homomultimer; forms the NLRP1 inflammasome polymeric complex, a filament composed of homopolymers of this form in response to pathogens and other damage-associated signals. The NLRP1 inflammasome polymeric complex associates with PYCARD/ASC. Interacts (via CARD domain) with PYCARD/ASC (via CARD domain); leading to pro-caspase-1 (proCASP1) recruitment. Pro-caspase-1 (proCASP1) filament formation increases local enzyme concentration, resulting in trans-autocleavage and activation. Active CASP1 then processes IL1B and IL18 precursors, leading to the release of mature cytokines in the extracellular milieu and inflammatory response. In terms of assembly, (Microbial infection) Interacts with vaccinia virus protein F1. As to quaternary structure, (Microbial infection) Interacts with human herpes virus 8/HHV-8 proteins ORF45; relieving autoinhibition of the NLRP1 inflammasome. Post-translationally, autocatalytically cleaved. Autocatalytic cleavage in FIIND region occurs constitutively, prior to activation signals, and is required for inflammasome activity (IL1B release), possibly by facilitating CASP1 binding. Both N- and C-terminal parts remain associated non-covalently. Ubiquitinated by the cullin:ZER1/ZYG11B complex in response to pathogen-associated signals, leading to its degradation by the proteasome and subsequent release of the cleaved C-terminal part of the protein (NACHT, LRR and PYD domains-containing protein 1, C-terminus), which polymerizes and forms the NLRP1 inflammasome. In terms of processing, phosphorylated by MAP3K20 isoform ZAKalpha, MAPK11 and MAPK14 in response to UV-B irradiation and ribosome collisions, promoting activation of the NLRP1 inflammasome and pyroptosis. Post-translationally, (Microbial infection) Cleaved between Gln-130 and Gly-131 by the Protease 3C from various human enteroviruses and rhinoviruses (EV68, EV71, Coxsackievirus B3, HRV-14 and HRV-16). This cleavage triggers N-glycine-mediated proteasomal degradation of the autoinhibitory NLRP1 N-terminal fragment via the cullin:ZER1/ZYG11B complex which liberates the activating C-terminal fragment and activates NLRP1 inflammasome. (Microbial infection) Cleaved between Gln-333 and Gly-334 by the 3C-like proteinase nsp5 from human coronavirus SARS-CoV-2. This cleavage liberates the activating C-terminal fragment and activates NLRP1 inflammasome, leading to downstream activation of GSDME and lung epithelial cell death. In terms of tissue distribution, widely expressed. Abundantly expressed in primary immune cells (isoform 1 and isoform 2), including in neutrophils, monocytes/macrophages, dendritic cells (mostly Langerhans cells), and B- and T-lymphocytes (at protein level). Strongly expressed in epithelial cells lining the glandular epithelium, such as that of the gastrointestinal tract (stomach, small intestine, colon), the respiratory tract (trachea and bronchi), and the endometrial and endocervical glands, gallbladder, prostate, and breast (at protein level). In testis, expressed in spermatogonia and primary spermatocytes, but not in Sertoli cells (at protein level). In the brain, expressed in neurons, in particular in pyramidal ones and in oligodendrocytes, but not detected in microglia (at protein level). Expressed in adult and fetal ocular tissues, including in adult and 24-week old fetal choroid, sclera, cornea, and optic nerve, as well as in adult retina and fetal retina/retinal pigment epithelium. Highly expressed in the skin throughout the epidermis and in dermal fibroblasts, in both glabrous skin and plantar skin. It is detected in keratinocytes, but not in melanocytes. Expressed in epidermal appendages such as hair follicles.

It is found in the cytoplasm. The protein localises to the cytosol. Its subcellular location is the nucleus. The protein resides in the inflammasome. The enzyme catalyses ATP + H2O = ADP + phosphate + H(+). Its activity is regulated as follows. NLRP1 inflammasome is activated by cleavage by the Protease 3C from various human enteroviruses and rhinoviruses (EV68, EV71, Coxsackievirus B3, HRV-14 and HRV-16): cleavage promotes ubiquitination and degradation of the N-terminal part, releasing the cleaved C-terminal part of the protein (NACHT, LRR and PYD domains-containing protein 1, C-terminus), which polymerizes and forms the NLRP1 inflammasome. Activated double-stranded RNA: positive-strand RNA viruses such as Semliki forest virus and long dsRNA activate the NLRP1 inflammasome. In contrast to its mouse ortholog, not activated by Bacillus anthracis lethal toxin. NLRP1 inflammasome is inhibited by DPP8 and DPP9, which sequester the C-terminal fragment of NLRP1 (NACHT, LRR and PYD domains-containing protein 1, C-terminus) in a ternary complex, thereby preventing NLRP1 oligomerization and activation. NLRP1 inflammasome is activated by Val-boroPro (Talabostat, PT-100), an inhibitor of dipeptidyl peptidases DPP8 and DPP9. Val-boroPro relieves inhibition of DPP8 and/or DPP9 by promoting disruption of the ternary complex, releasing its C-terminal part from autoinhibition. ATPase activity is activated by dsRNA-binding but not dsDNA-binding. (Microbial infection) The NLRP1 inflammasome is activated by human herpes virus 8/HHV-8 protein ORF45, which interacts with the N-terminal part of NLRP1 and promotes its translocation into the nucleus, relieving autoinhibition and leading to activation. With respect to regulation, (Microbial infection) NLRP1 inflammasome is activated by cleavage by the 3C-like proteinase nsp5 from human coronavirus SARS-CoV-2. Its function is as follows. Acts as the sensor component of the NLRP1 inflammasome, which mediates inflammasome activation in response to various pathogen-associated signals, leading to subsequent pyroptosis. Inflammasomes are supramolecular complexes that assemble in the cytosol in response to pathogens and other damage-associated signals and play critical roles in innate immunity and inflammation. Acts as a recognition receptor (PRR): recognizes specific pathogens and other damage-associated signals, such as cleavage by some human enteroviruses and rhinoviruses, double-stranded RNA, UV-B irradiation, or Val-boroPro inhibitor, and mediates the formation of the inflammasome polymeric complex composed of NLRP1, CASP1 and PYCARD/ASC. In response to pathogen-associated signals, the N-terminal part of NLRP1 is degraded by the proteasome, releasing the cleaved C-terminal part of the protein (NACHT, LRR and PYD domains-containing protein 1, C-terminus), which polymerizes and associates with PYCARD/ASC to initiate the formation of the inflammasome complex: the NLRP1 inflammasome recruits pro-caspase-1 (proCASP1) and promotes caspase-1 (CASP1) activation, which subsequently cleaves and activates inflammatory cytokines IL1B and IL18 and gasdermin-D (GSDMD), leading to pyroptosis. In the absence of GSDMD expression, the NLRP1 inflammasome is able to recruit and activate CASP8, leading to activation of gasdermin-E (GSDME). Activation of NLRP1 inflammasome is also required for HMGB1 secretion; the active cytokines and HMGB1 stimulate inflammatory responses. Binds ATP and shows ATPase activity. Plays an important role in antiviral immunity and inflammation in the human airway epithelium. Specifically recognizes a number of pathogen-associated signals: upon infection by human rhinoviruses 14 and 16 (HRV-14 and HRV-16), NLRP1 is cleaved and activated which triggers NLRP1-dependent inflammasome activation and IL18 secretion. Positive-strand RNA viruses, such as Semliki forest virus and long dsRNA activate the NLRP1 inflammasome, triggering IL1B release in a NLRP1-dependent fashion. Acts as a direct sensor for long dsRNA and thus RNA virus infection. May also be activated by muramyl dipeptide (MDP), a fragment of bacterial peptidoglycan, in a NOD2-dependent manner. The NLRP1 inflammasome is also activated in response to UV-B irradiation causing ribosome collisions: ribosome collisions cause phosphorylation and activation of NLRP1 in a MAP3K20-dependent manner, leading to pyroptosis. Constitutes the precursor of the NLRP1 inflammasome, which mediates autoproteolytic processing within the FIIND domain to generate the N-terminal and C-terminal parts, which are associated non-covalently in absence of pathogens and other damage-associated signals. In terms of biological role, regulatory part that prevents formation of the NLRP1 inflammasome: in absence of pathogens and other damage-associated signals, interacts with the C-terminal part of NLRP1 (NACHT, LRR and PYD domains-containing protein 1, C-terminus), preventing activation of the NLRP1 inflammasome. In response to pathogen-associated signals, this part is ubiquitinated and degraded by the proteasome, releasing the cleaved C-terminal part of the protein, which polymerizes and forms the NLRP1 inflammasome. Functionally, constitutes the active part of the NLRP1 inflammasome. In absence of pathogens and other damage-associated signals, interacts with the N-terminal part of NLRP1 (NACHT, LRR and PYD domains-containing protein 1, N-terminus), preventing activation of the NLRP1 inflammasome. In response to pathogen-associated signals, the N-terminal part of NLRP1 is degraded by the proteasome, releasing this form, which polymerizes and associates with PYCARD/ASC to form of the NLRP1 inflammasome complex: the NLRP1 inflammasome complex then directly recruits pro-caspase-1 (proCASP1) and promotes caspase-1 (CASP1) activation, leading to gasdermin-D (GSDMD) cleavage and subsequent pyroptosis. Its function is as follows. It is unclear whether is involved in inflammasome formation. It is not cleaved within the FIIND domain, does not assemble into specks, nor promote IL1B release. However, in an vitro cell-free system, it has been shown to be activated by MDP. The chain is NACHT, LRR and PYD domains-containing protein 1 from Homo sapiens (Human).